The sequence spans 151 residues: MTKKYAMTATEVMEVIPNRYPIMFIDYVDEISENKIVATKNVTINEEVFNGHFPGNPTFPGVLILESLAQAGSILILKKEEFQGKMAYIGGIDKAKFRQKVTPGDVMKLEFEITKFRGKVGTADAAAYVDGKKVTTCQFTFIVDEAAEQTN.

His-52 is an active-site residue.

It belongs to the thioester dehydratase family. FabZ subfamily.

The protein resides in the cytoplasm. It carries out the reaction a (3R)-hydroxyacyl-[ACP] = a (2E)-enoyl-[ACP] + H2O. In terms of biological role, involved in unsaturated fatty acids biosynthesis. Catalyzes the dehydration of short chain beta-hydroxyacyl-ACPs and long chain saturated and unsaturated beta-hydroxyacyl-ACPs. The protein is 3-hydroxyacyl-[acyl-carrier-protein] dehydratase FabZ (fabZ1) of Lactococcus lactis subsp. lactis (strain IL1403) (Streptococcus lactis).